The following is a 68-amino-acid chain: MMSKLGVLLTICLLLFPLTAVRLDGDQHTDRPADRMQDIATEQHPLFDPVKRCCDWPCTIGCVPCCLP.

An N-terminal signal peptide occupies residues 1-20 (MMSKLGVLLTICLLLFPLTA). The propeptide occupies 21 to 52 (VRLDGDQHTDRPADRMQDIATEQHPLFDPVKR). 3 disulfides stabilise this stretch: cysteine 53-cysteine 66, cysteine 54-cysteine 62, and cysteine 58-cysteine 65. Proline 64 bears the 4-hydroxyproline mark.

This sequence belongs to the conotoxin M superfamily. In terms of tissue distribution, expressed by the venom duct.

It localises to the secreted. The chain is Conotoxin TsMMSK-021 from Conus tessulatus (Tessellate cone).